We begin with the raw amino-acid sequence, 581 residues long: Probable bifunctional SAT/APS kinase 2 (581 aa).

The adenylsulfate kinase stretch occupies residues 1–200; that stretch reads MSGFVVWFTG…AAGGARGLIA (200 aa). Residue 10 to 17 participates in ATP binding; it reads GLSGAGKS. The Phosphoserine intermediate role is filled by Ser-84. The sulfate adenylyltransferase stretch occupies residues 201-581; the sequence is PHGGELVNRW…ILIESMRSSS (381 aa).

It in the N-terminal section; belongs to the APS kinase family. This sequence in the C-terminal section; belongs to the sulfate adenylyltransferase family.

The catalysed reaction is sulfate + ATP + H(+) = adenosine 5'-phosphosulfate + diphosphate. It catalyses the reaction adenosine 5'-phosphosulfate + ATP = 3'-phosphoadenylyl sulfate + ADP + H(+). It functions in the pathway sulfur metabolism; hydrogen sulfide biosynthesis; sulfite from sulfate: step 1/3. Its pathway is sulfur metabolism; hydrogen sulfide biosynthesis; sulfite from sulfate: step 2/3. In Sorangium cellulosum (strain So ce56) (Polyangium cellulosum (strain So ce56)), this protein is Probable bifunctional SAT/APS kinase 2 (sat2/cysC2).